The following is a 315-amino-acid chain: Three-prime repair exonuclease 1 (315 aa).

Positions 18 and 20 each coordinate Mg(2+). Glutamate 20–alanine 21 provides a ligand contact to substrate. At serine 78 the chain carries Phosphoserine. Residue tyrosine 129 coordinates substrate. Serine 167 carries the phosphoserine modification. The active-site Proton donor/acceptor is the histidine 195. Mg(2+) is bound at residue aspartate 200. Aspartate 200 contacts substrate. Positions threonine 236 to glutamine 315 are necessary for endoplasmic reticulum localization. The tract at residues proline 243–glutamine 315 is interaction with UBQLN1. The tract at residues arginine 256–alanine 282 is disordered. Residues lysine 271–alanine 282 are compositionally biased toward pro residues. The segment at alanine 282–glutamine 315 is necessary for cytoplasmic retention.

Belongs to the exonuclease superfamily. TREX family. Homodimer. Interacts (via proline-rich region) with TCERG1/CA150 (via the second WW domain). Component of the SET complex, composed of at least ANP32A, APEX1, HMGB2, NME1, SET and TREX1. Within this complex, directly interacts with SET; this interaction does not result in TREX1 inhibition. Also interacts with NME1, but only following translocation to the nucleus. Directly interacts with UBQLN1 (via ubiquitin-like domain); the interaction may control TREX1 subcellular location. It depends on Mg(2+) as a cofactor. In terms of processing, ubiquitinated, but not targeted to proteasomal degradation. Ubiquitination may be important for interaction with UBQLN1.

The protein resides in the nucleus. It localises to the cytoplasm. Its subcellular location is the cytosol. The protein localises to the endoplasmic reticulum membrane. It carries out the reaction Exonucleolytic cleavage in the 3'- to 5'-direction to yield nucleoside 5'-phosphates.. In terms of biological role, major cellular 3'-to-5' DNA exonuclease which digests single-stranded DNA (ssDNA) and double-stranded DNA (dsDNA) with mismatched 3' termini. Prevents cell-intrinsic initiation of autoimmunity. Acts by metabolizing DNA fragments from endogenous retroelements, including L1, LTR and SINE elements. Plays a key role in degradation of DNA fragments at cytosolic micronuclei arising from genome instability: its association with the endoplasmic reticulum membrane directs TREX1 to ruptured micronuclei, leading to micronuclear DNA degradation. Micronuclear DNA degradation is required to limit CGAS activation and subsequent inflammation. Unless degraded, these DNA fragments accumulate in the cytosol and activate the cGAS-STING innate immune signaling, leading to the production of type I interferon. Prevents chronic ATM-dependent checkpoint activation, by processing ssDNA polynucleotide species arising from the processing of aberrant DNA replication intermediates. Inefficiently degrades oxidized DNA, such as that generated upon antimicrobial reactive oxygen production or upon absorption of UV light. During GZMA-mediated cell death, contributes to DNA damage in concert with NME1. NME1 nicks one strand of DNA and TREX1 removes bases from the free 3' end to enhance DNA damage and prevent DNA end reannealing and rapid repair. The polypeptide is Three-prime repair exonuclease 1 (Bos taurus (Bovine)).